A 451-amino-acid polypeptide reads, in one-letter code: UDP-N-acetylmuramoylalanine--D-glutamate ligase (451 aa).

Residue 119-125 (GSNGKTT) participates in ATP binding.

Belongs to the MurCDEF family.

The protein resides in the cytoplasm. It catalyses the reaction UDP-N-acetyl-alpha-D-muramoyl-L-alanine + D-glutamate + ATP = UDP-N-acetyl-alpha-D-muramoyl-L-alanyl-D-glutamate + ADP + phosphate + H(+). It functions in the pathway cell wall biogenesis; peptidoglycan biosynthesis. Cell wall formation. Catalyzes the addition of glutamate to the nucleotide precursor UDP-N-acetylmuramoyl-L-alanine (UMA). The chain is UDP-N-acetylmuramoylalanine--D-glutamate ligase from Bacillus cytotoxicus (strain DSM 22905 / CIP 110041 / 391-98 / NVH 391-98).